A 73-amino-acid chain; its full sequence is Putative beta-defensin 108A (73 aa).

The first 22 residues, 1 to 22, serve as a signal peptide directing secretion; it reads MRIAVLFFTIFFFMSQVLPAKG. 3 cysteine pairs are disulfide-bonded: cysteine 28-cysteine 55, cysteine 35-cysteine 49, and cysteine 39-cysteine 56.

Belongs to the beta-defensin family.

It is found in the secreted. Functionally, has antibacterial activity. This Homo sapiens (Human) protein is Putative beta-defensin 108A.